The sequence spans 1522 residues: DNA topoisomerase 2-binding protein 1 (1522 aa).

BRCT domains lie at 101-189 (VYNM…RYTD) and 195-284 (FKCP…IYKT). A Phosphothreonine modification is found at Thr-298. Phosphoserine is present on Ser-301. BRCT domains follow at residues 354-444 (APED…PYIH), 548-633 (TEEG…SNPL), and 641-738 (TGMT…HFLI). Residues 756–891 (INLNSDTAEH…AVALSASPQL (136 aa)) are interaction with CIP2A. Thr-779 and Thr-848 each carry phosphothreonine. Residues 852–858 (PSQQKRK) carry the Nuclear localization signal motif. Phosphoserine is present on Ser-860. Thr-861 carries the post-translational modification Phosphothreonine. Ser-864, Ser-886, and Ser-888 each carry phosphoserine. Positions 900–991 (EAPKPLHKVV…KHLPESLYPH (92 aa)) constitute a BRCT 6 domain. The residue at position 1002 (Ser-1002) is a Phosphoserine. Residues 1018–1058 (VSSTKDDEPDPLILEENDVDNMATNNKESAPSNGSGKNDSK) are disordered. Acidic residues predominate over residues 1024 to 1036 (DEPDPLILEENDV). Residues 1039–1058 (MATNNKESAPSNGSGKNDSK) show a composition bias toward polar residues. Residues Thr-1062 and Thr-1064 each carry the phosphothreonine modification. The segment covering 1083 to 1114 (SIVKPQGQRTSLSRSGCNSASSTPDSTRSARS) has biased composition (polar residues). The segment at 1083–1118 (SIVKPQGQRTSLSRSGCNSASSTPDSTRSARSGRSR) is disordered. BRCT domains are found at residues 1259 to 1351 (ETHE…DYEW) and 1389 to 1486 (IVEG…NYCL). The tract at residues 1501-1522 (TGLSQKRKAPTEKNKIKRPRVH) is disordered. The residue at position 1504 (Ser-1504) is a Phosphoserine. The short motif at 1517–1520 (KRPR) is the Nuclear localization signal element.

It belongs to the TOPBP1 family. As to quaternary structure, interacts (via BRCT domains 1 and 2) with (phosphorylated) MDC1; promoting TOPBP1 recruitment to DNA damage sites during mitosis. Interacts (via BRCT domains 7 and 8) with (autophosphorylated) ATR; promoting activation of ATR. Interacts (via BRCT domains 7 and 8) with (phosphorylated) POLQ; specifically binds POLQ phosphorylated by PLK1, promoting POLQ recruitment to DNA damage sites. Interacts (via BRCT domains 1 and 2) with (phosphorylated) RAD9A. Interacts (via BRCT domain 2) with (phosphorylated) TP53BP1. Interacts (via BRCT domain 2) with (phosphorylated) HTATSF1. Interacts (via BRCT domains 7 and 8) with (phosphorylated) RAD51; promoting RAD51 recruitment to damaged chromatin. Interacts with CIP2A; forming the CIP2A-TOPBP1 complex. Interacts with POLE. Interacts with UBR5. Interacts with E2F1. Interacts with PML. Interacts with SMARCA2. Interacts with SMARCA4. Interacts with RHNO1. May interact with TOP2B. Interacts with TICRR. Interacts with HELB. Interacts (via residues 1233-1522) with RECQL4. Post-translationally, phosphorylated on serine and threonine residues in response to X-ray irradiation. In terms of processing, ubiquitinated and degraded by the proteasome. X-ray irradiation reduces ubiquitination. Deubiquitinated by USP13; leading to TOPBP1 stabilizion and activation of the ATR-TOPBP1 axis pathway. As to expression, highly expressed in heart, brain, placenta, lung and kidney.

It is found in the nucleus. The protein resides in the chromosome. The protein localises to the cytoplasm. It localises to the cytoskeleton. Its subcellular location is the microtubule organizing center. It is found in the centrosome. The protein resides in the spindle pole. Functionally, scaffold protein that acts as a key protein-protein adapter in DNA replication and DNA repair. Composed of multiple BRCT domains, which specifically recognize and bind phosphorylated proteins, bringing proteins together into functional combinations. Required for DNA replication initiation but not for the formation of pre-replicative complexes or the elongation stages. Necessary for the loading of replication factors onto chromatin, including GMNC, CDC45, DNA polymerases and components of the GINS complex. Plays a central role in DNA repair by bridging proteins and promoting recruitment of proteins to DNA damage sites. Involved in double-strand break (DSB) repair via homologous recombination in S-phase by promoting the exchange between the DNA replication factor A (RPA) complex and RAD51. Mechanistically, TOPBP1 is recruited to DNA damage sites in S-phase via interaction with phosphorylated HTATSF1, and promotes the loading of RAD51, thereby facilitating RAD51 nucleofilaments formation and RPA displacement, followed by homologous recombination. Involved in microhomology-mediated end-joining (MMEJ) DNA repair by promoting recruitment of polymerase theta (POLQ) to DNA damage sites during mitosis. MMEJ is an alternative non-homologous end-joining (NHEJ) machinery that takes place during mitosis to repair DSBs in DNA that originate in S-phase. Recognizes and binds POLQ phosphorylated by PLK1, enabling its recruitment to DSBs for subsequent repair. Involved in G1 DNA damage checkpoint by acting as a molecular adapter that couples TP53BP1 and the 9-1-1 complex. In response to DNA damage, triggers the recruitment of checkpoint signaling proteins on chromatin, which activate the CHEK1 signaling pathway and block S-phase progression. Acts as an activator of the kinase activity of ATR. Also required for chromosomal stability when DSBs occur during mitosis by forming filamentous assemblies that bridge MDC1 and tether broken chromosomes during mitosis. Together with CIP2A, plays an essential role in the response to genome instability generated by the presence of acentric chromosome fragments derived from shattered chromosomes within micronuclei. Micronuclei, which are frequently found in cancer cells, consist of chromatin surrounded by their own nuclear membrane: following breakdown of the micronuclear envelope, a process associated with chromothripsis, the CIP2A-TOPBP1 complex tethers chromosome fragments during mitosis to ensure clustered segregation of the fragments to a single daughter cell nucleus, facilitating re-ligation with limited chromosome scattering and loss. Recruits the SWI/SNF chromatin remodeling complex to E2F1-responsive promoters, thereby down-regulating E2F1 activity and inhibiting E2F1-dependent apoptosis during G1/S transition and after DNA damage. In Homo sapiens (Human), this protein is DNA topoisomerase 2-binding protein 1.